A 725-amino-acid chain; its full sequence is Polyribonucleotide nucleotidyltransferase (725 aa).

The Mg(2+) site is built by Asp506 and Asp512. The KH domain occupies 571–631; that stretch reads PLIEQFAIDP…QNIIDACEHI (61 aa). The S1 motif domain occupies 657–724; sequence DEVVIGKVER…KKDRIELSSA (68 aa).

The protein belongs to the polyribonucleotide nucleotidyltransferase family. Requires Mg(2+) as cofactor.

Its subcellular location is the cytoplasm. The catalysed reaction is RNA(n+1) + phosphate = RNA(n) + a ribonucleoside 5'-diphosphate. In terms of biological role, involved in mRNA degradation. Catalyzes the phosphorolysis of single-stranded polyribonucleotides processively in the 3'- to 5'-direction. This Aliarcobacter butzleri (strain RM4018) (Arcobacter butzleri) protein is Polyribonucleotide nucleotidyltransferase.